Reading from the N-terminus, the 179-residue chain is Large ribosomal subunit protein uL5 (179 aa).

This sequence belongs to the universal ribosomal protein uL5 family. Part of the 50S ribosomal subunit; part of the 5S rRNA/L5/L18/L25 subcomplex. Contacts the 5S rRNA and the P site tRNA. Forms a bridge to the 30S subunit in the 70S ribosome.

In terms of biological role, this is one of the proteins that bind and probably mediate the attachment of the 5S RNA into the large ribosomal subunit, where it forms part of the central protuberance. In the 70S ribosome it contacts protein S13 of the 30S subunit (bridge B1b), connecting the 2 subunits; this bridge is implicated in subunit movement. Contacts the P site tRNA; the 5S rRNA and some of its associated proteins might help stabilize positioning of ribosome-bound tRNAs. The sequence is that of Large ribosomal subunit protein uL5 from Pseudomonas entomophila (strain L48).